Reading from the N-terminus, the 808-residue chain is MLVSYQWLKQYVDLDGISAEEVAEKLTRGGIEVDIIHDLNQGATGVVVGHVLECRQHPNADKLNLCQVEIGEEEPVQIVCGAPNVAAGQKVAVAKVGAVLPGNFKIKKAKLRGELSQGMICSLQELGVENKFVQKEFADGIYVFSDDVEIGSDALEALNRYDQVLELDLTPNRSDCLNMYGVAYEVAALFDKEVHWPTAESSGTDGQASDYVSVEIEDIEKNPYYGATIIKNVKVGPSPLWLQNRLIAAGIRPISNVVDVTNYVLLEYGQPLHAFDYDRLGSNKVVTRLAKEGEKMVTLDDVERTLQADHLLITNGRDPVAIAGVMGGATSEVQEDTTTVLLEAAYFDPATVRKASRDLGLRSDSSSRFEKGVDPKRVREAAARAATLIAEVAGGTVVGGVVEAGELAIEEPVVSLNLPHMNQRLGMELSHDEVAAIFDRLGFAYTVENDTFEVTAPSRRGDIRIEEDLFEEVARLYGYDNIPTTFPVGGTTRGGLTDYQQKRRKIRRYLEGAGLFEVMTYSLTSEEKEKGLQGENEDYLPIRVAMPMSEERSTMRTSLVPHLLDVVQYNLNRKQEALFIYELGSVFLSKEETLTKQPEEREMLAGALTGFWTEHLWQGEKKAVDFFVVKGILEGMFAELGLSEKVTFERGEQPGMHPGRTANVKVNGRAVGFAGQIHPERQSELDLKETYVFQLDVESLLTEEGTEVAYEPLPRFPAISRDIALVVDENVTAAQLQQVIEANGGEWLKHVYLFDLYEGEHMEAGKKSIAFSLTYFDPERTLTDEEVTAVHEQILKELEASTGAVLRG.

Residues 40 to 155 form the tRNA-binding domain; it reads NQGATGVVVG…DDVEIGSDAL (116 aa). A B5 domain is found at 409–484; that stretch reads IEEPVVSLNL…RLYGYDNIPT (76 aa). Asp462, Asp468, Glu471, and Glu472 together coordinate Mg(2+). Residues 714 to 807 enclose the FDX-ACB domain; it reads PRFPAISRDI…LEASTGAVLR (94 aa).

It belongs to the phenylalanyl-tRNA synthetase beta subunit family. Type 1 subfamily. As to quaternary structure, tetramer of two alpha and two beta subunits. Requires Mg(2+) as cofactor.

It localises to the cytoplasm. The enzyme catalyses tRNA(Phe) + L-phenylalanine + ATP = L-phenylalanyl-tRNA(Phe) + AMP + diphosphate + H(+). The polypeptide is Phenylalanine--tRNA ligase beta subunit (pheT) (Halalkalibacterium halodurans (strain ATCC BAA-125 / DSM 18197 / FERM 7344 / JCM 9153 / C-125) (Bacillus halodurans)).